The primary structure comprises 370 residues: Prolactin-releasing peptide receptor (370 aa).

The Extracellular segment spans residues 1–62 (MASLPTQGPA…LQLVHQLKGL (62 aa)). N27 and N36 each carry an N-linked (GlcNAc...) asparagine glycan. Residues 63-83 (IVLLYSIVVVVGLVGNCLLVL) traverse the membrane as a helical segment. At 84 to 101 (VIARVRRLHNVTNFLIGN) the chain is on the cytoplasmic side. Residues 102 to 122 (LALSDVLMCTACVPLTLAYAF) traverse the membrane as a helical segment. At 123–126 (EPRG) the chain is on the extracellular side. The chain crosses the membrane as a helical span at residues 127–147 (WVFGGGLCHLVFFLQPVTVYV). An intrachain disulfide couples C134 to C211. The Cytoplasmic portion of the chain corresponds to 148-175 (SVFTLTTIAVDRYVVLVHPLRRRISLRF). A helical membrane pass occupies residues 176 to 196 (SAYAVLAIWALSAVLALPAAL). Topologically, residues 197-225 (HTYHVELKPHRVRLCEEFWGSQERQRQLY) are extracellular. A helical membrane pass occupies residues 226–246 (AWGLLLVTYLLPLLVILLSYV). The Cytoplasmic portion of the chain corresponds to 247-276 (RVSVNLRNRVVPGCVTQSQADWDRARRRRT). The chain crosses the membrane as a helical span at residues 277-297 (FCLLVVVVVVFAVCWLPLHVF). Topologically, residues 298 to 317 (NLLRDLDPHAIDPYAFGLVQ) are extracellular. A helical transmembrane segment spans residues 318-338 (LLCHWLAMSSACYNPFIYAWL). Topologically, residues 339 to 369 (HDSFREELRKLLLAWPRKIAPHGQSMTVSVV) are cytoplasmic. The interval 365–370 (TVSVVI) is required for interaction with GRIP1, GRIP2 and PICK1.

This sequence belongs to the G-protein coupled receptor 1 family. In terms of assembly, interacts through its C-terminal region with the PDZ domain-containing proteins GRIP1, GRIP2 and PICK1. Interacts with PDZ domains 4 and 5 of GRIP1 and with the PDZ domain of PICK1.

It is found in the cell membrane. Its function is as follows. Receptor for prolactin-releasing peptide (PrRP). Implicated in lactation, regulation of food intake and pain-signal processing. The sequence is that of Prolactin-releasing peptide receptor (PRLHR) from Bos taurus (Bovine).